Reading from the N-terminus, the 240-residue chain is MLQNQSHTLIGVTKTAVFFLYAALAIIGFAIGYFIPQIAKWALSLPWIPLEGPLRLITSFQGSTASFITALLGMCAGIWFAHSVIAMLLSVKITDHTVEFIKGKKVQTIHSDDIALVFMDHKRLVLLGTAGYELVREEIDEKPVNVEKAFRQHHYEWATDGDPFKDQFRRWIPDAPDLSQGAHALLKARHKALQDEEKDDIEEFRLELAQLGIVVRDEGTRQYWRKAETYPPKIQLGEGL.

2 consecutive transmembrane segments (helical) span residues 16–36 (AVFF…YFIP) and 67–87 (FITA…VIAM).

It is found in the cell membrane. This is an uncharacterized protein from Bacillus subtilis (strain 168).